A 129-amino-acid polypeptide reads, in one-letter code: MPTYNQLVRFGRKSKTRKTKSPALESNPFKSGVCLVVKTVTPKKPNSALRKIATVRLSNKRTVNAYIPGEKHSVKEHDRVLVRGGQVPDLPGVKYHIVLGAYDIAGVKGRKQGRSRYGTPRKQVAVTKK.

A disordered region spans residues 1–25 (MPTYNQLVRFGRKSKTRKTKSPALE). The segment covering 10 to 20 (FGRKSKTRKTK) has biased composition (basic residues). Asp-89 bears the 3-methylthioaspartic acid mark. Positions 109–129 (GRKQGRSRYGTPRKQVAVTKK) are disordered.

Belongs to the universal ribosomal protein uS12 family. In terms of assembly, part of the 30S ribosomal subunit. Contacts proteins S8 and S17. May interact with IF1 in the 30S initiation complex.

With S4 and S5 plays an important role in translational accuracy. Functionally, interacts with and stabilizes bases of the 16S rRNA that are involved in tRNA selection in the A site and with the mRNA backbone. Located at the interface of the 30S and 50S subunits, it traverses the body of the 30S subunit contacting proteins on the other side and probably holding the rRNA structure together. The combined cluster of proteins S8, S12 and S17 appears to hold together the shoulder and platform of the 30S subunit. This chain is Small ribosomal subunit protein uS12, found in Rickettsia peacockii (strain Rustic).